A 236-amino-acid chain; its full sequence is tRNA (guanine-N(7)-)-methyltransferase (236 aa).

S-adenosyl-L-methionine-binding residues include D35, E60, N87, and D113. Residue D113 is part of the active site. K117 and D149 together coordinate substrate.

Belongs to the class I-like SAM-binding methyltransferase superfamily. TrmB family.

It carries out the reaction guanosine(46) in tRNA + S-adenosyl-L-methionine = N(7)-methylguanosine(46) in tRNA + S-adenosyl-L-homocysteine. It functions in the pathway tRNA modification; N(7)-methylguanine-tRNA biosynthesis. In terms of biological role, catalyzes the formation of N(7)-methylguanine at position 46 (m7G46) in tRNA. The protein is tRNA (guanine-N(7)-)-methyltransferase of Prochlorococcus marinus (strain MIT 9313).